Consider the following 655-residue polypeptide: uncharacterized protein (655 aa).

The PE-PPE domain occupies 245–469 (PGVIAQALFT…NLKVIVNLGY (225 aa)).

It belongs to the mycobacterial PPE family.

This is an uncharacterized protein from Mycobacterium tuberculosis (strain ATCC 25618 / H37Rv).